The chain runs to 240 residues: Glutathione S-transferase theta-1 (240 aa).

One can recognise a GST N-terminal domain in the interval 2-82; the sequence is VLELYLDLLS…YLAHKYKVPD (81 aa). Glutathione contacts are provided by residues H40, 53-54, and 66-67; these read KV and ES. A GST C-terminal domain is found at 88-223; that stretch reads DLQARARVDE…ILKVRDCPPA (136 aa).

It belongs to the GST superfamily. Theta family. As to quaternary structure, homodimer. In liver, highest expression found in central vein limiting plate hepatocytes. In lung, expressed mainly in club cells of the bronchiolar epithelium and, at low levels, in type II alveolar cells.

It is found in the cytoplasm. It catalyses the reaction RX + glutathione = an S-substituted glutathione + a halide anion + H(+). Its function is as follows. Conjugation of reduced glutathione to a wide number of exogenous and endogenous hydrophobic electrophiles. Also binds steroids, bilirubin, carcinogens and numerous organic anions. Has dichloromethane dehalogenase activity. This is Glutathione S-transferase theta-1 (Gstt1) from Rattus norvegicus (Rat).